The primary structure comprises 188 residues: Protein SSX1 (188 aa).

2 disordered regions span residues 1 to 22 (MNGD…EKRS) and 111 to 188 (IMPK…EDDE). One can recognise a KRAB-related domain in the interval 20-83 (KRSKAFDDIA…KQATDFQGND (64 aa)). A compositionally biased stretch (basic and acidic residues) spans 115-125 (KPAEDENDSKG). Ser123 is modified (phosphoserine). Positions 153–170 (KRSGPKRGKHAWTHRLRE) are enriched in basic residues. Residues 179 to 188 (EISDPEEDDE) are compositionally biased toward acidic residues.

Belongs to the SSX family. In terms of tissue distribution, expressed at high level in the testis. Expressed at low level in thyroid. Not detected in tonsil, colon, lung, spleen, prostate, kidney, striated and smooth muscles. Detected in rhabdomyosarcoma and fibrosarcoma cell lines. Not detected in mesenchymal and epithelial cell lines. Expressed in testis.

Its subcellular location is the cytoplasm. It is found in the cytoskeleton. The protein resides in the flagellum axoneme. Its function is as follows. Could act as a modulator of transcription. Plays a role in spermatogenesis. This is Protein SSX1 (SSX1) from Homo sapiens (Human).